Consider the following 403-residue polypeptide: Cysteine desulfurase IscS (403 aa).

Residues 75–76 (AT), Asn-155, Gln-183, and 203–205 (SAH) each bind pyridoxal 5'-phosphate. N6-(pyridoxal phosphate)lysine is present on Lys-206. Thr-243 contributes to the pyridoxal 5'-phosphate binding site. Cys-328 serves as the catalytic Cysteine persulfide intermediate. Residue Cys-328 coordinates [2Fe-2S] cluster.

It belongs to the class-V pyridoxal-phosphate-dependent aminotransferase family. NifS/IscS subfamily. In terms of assembly, homodimer. Forms a heterotetramer with IscU, interacts with other sulfur acceptors. The cofactor is pyridoxal 5'-phosphate.

The protein resides in the cytoplasm. It catalyses the reaction (sulfur carrier)-H + L-cysteine = (sulfur carrier)-SH + L-alanine. It participates in cofactor biosynthesis; iron-sulfur cluster biosynthesis. Master enzyme that delivers sulfur to a number of partners involved in Fe-S cluster assembly, tRNA modification or cofactor biosynthesis. Catalyzes the removal of elemental sulfur atoms from cysteine to produce alanine. Functions as a sulfur delivery protein for Fe-S cluster synthesis onto IscU, an Fe-S scaffold assembly protein, as well as other S acceptor proteins. This is Cysteine desulfurase IscS from Psychromonas ingrahamii (strain DSM 17664 / CCUG 51855 / 37).